Consider the following 290-residue polypeptide: MITFSELLLKLQDFWAKQGCTIVQPYDFPSGAGTFHPATFLKSLDSKPWATAYVAPSRRPTDGRYGENPNRLGAYYQFQVLIKPSPDNIQDLYLKSLEALGLDWRKHDIRFVEDNWESPTLGAWGLGWEVWLDGMEVTQFTYFQQVGGFECDPVAVEITYGTERLAMYLQEVESVFDIVWSKNGGHIVTYADVHKRGEFEYSRYNFEVADTKMLFDWFEDASRECKRCLEEKLPLPAYDYCLLASHIFNTLDARKAISVTERQNFILKVRELAKGCAEVYKESLGELSEA.

This sequence belongs to the class-II aminoacyl-tRNA synthetase family. In terms of assembly, tetramer of two alpha and two beta subunits.

It localises to the cytoplasm. The enzyme catalyses tRNA(Gly) + glycine + ATP = glycyl-tRNA(Gly) + AMP + diphosphate. The chain is Glycine--tRNA ligase alpha subunit from Nitratiruptor sp. (strain SB155-2).